Reading from the N-terminus, the 391-residue chain is Tumor susceptibility gene 101 protein (391 aa).

An N-acetylalanine modification is found at A2. The 144-residue stretch at 2 to 145 folds into the UEV domain; it reads AVSESQLKKM…GEEPPVFSRP (144 aa). Residues 159-163 form an interaction with CEP55 region; sequence PPNTS. Positions 197-220 are disordered; sequence YPATTSSQYPSQPPVTTVGPSRDG. A compositionally biased stretch (polar residues) spans 200–215; it reads TTSSQYPSQPPVTTVG. Position 221 is a phosphothreonine (T221). Residues 237-317 are a coiled coil; the sequence is DKLRWRMKEE…NQSENNDIDE (81 aa). Residues 321–324 carry the PTAP/PSAP motif motif; it reads PTAP. Residues 323-391 enclose the SB domain; the sequence is APLYKQILNL…RKTAGLSDLY (69 aa).

This sequence belongs to the ubiquitin-conjugating enzyme family. UEV subfamily. As to quaternary structure, component of the ESCRT-I complex (endosomal sorting complex required for transport I) which consists of TSG101, VPS28, a VPS37 protein (VPS37A to -D) and MVB12A or MVB12B in a 1:1:1:1 stoichiometry. Interacts with VPS37A, VPS37B and VPS37C. Component of an ESCRT-I complex (endosomal sorting complex required for transport I) which consists of TSG101, VPS28, VPS37A and UBAP1 in a 1:1:1:1 stoichiometry. Interacts with DMAP1. Interacts with GMCL. Interacts with ubiquitin, stathmin and AATF. Interacts with HGS; the interaction mediates the association with the ESCRT-0 complex. Interacts with GGA1 and GGA3. Interacts (via UEV domain) with PDCD6IP/AIP1. Interacts with VPS28, SNF8 and VPS36. Self-associates. Interacts with MVB12A; the association appears to be mediated by the TSG101-VPS37 binary subcomplex. Interacts with VPS37D. Interacts with LRSAM1. Interacts with CEP55; the interaction is required for cytokinesis. Interacts with PDCD6. Interacts with LITAF. Interacts with murine leukemia virus Gag polyprotein (via PSAP motif). Interacts with MGRN1. Interacts with ARRDC1; recruits TSG101 to the plasma membrane. In terms of processing, monoubiquitinated at multiple sites by LRSAM1 and by MGRN1. Ubiquitination inactivates it, possibly by regulating its shuttling between an active membrane-bound protein and an inactive soluble form. Ubiquitination by MGRN1 requires the presence of UBE2D1. As to expression, ubiquitous. Higher expression in brain and mammary gland. Lower expression in liver and tumoral tissues.

Its subcellular location is the cytoplasm. It is found in the early endosome membrane. It localises to the late endosome membrane. The protein localises to the cytoskeleton. The protein resides in the microtubule organizing center. Its subcellular location is the centrosome. It is found in the midbody. It localises to the midbody ring. The protein localises to the nucleus. Its function is as follows. Component of the ESCRT-I complex, a regulator of vesicular trafficking process. Binds to ubiquitinated cargo proteins and is required for the sorting of endocytic ubiquitinated cargos into multivesicular bodies (MVBs). Mediates the association between the ESCRT-0 and ESCRT-I complex. Required for completion of cytokinesis; the function requires CEP55. May be involved in cell growth and differentiation. Acts as a negative growth regulator. Required for the exosomal release of SDCBP, CD63 and syndecan. It may also play a role in the extracellular release of microvesicles that differ from the exosomes. In Mus musculus (Mouse), this protein is Tumor susceptibility gene 101 protein (Tsg101).